The primary structure comprises 439 residues: Structure-specific endonuclease subunit SLX1 homolog (439 aa).

Disordered regions lie at residues 1–28 and 117–140; these read METFILSSDSDDDCPPPPKRRSIEGVPK and DDDDDDEKESSTEHADDDLNLRAL. Over residues 125-136 the composition is skewed to basic and acidic residues; the sequence is ESSTEHADDDLN. Residues 166–253 enclose the GIY-YIG domain; sequence EFYGVYCLIS…PAVSKSLKEK (88 aa). Residues 335-390 form an SLX1-type zinc finger; that stretch reads CRLCGKDIEKLWGLVRCISQSCHSHFHSKCLAEHGLKNKNEYADQIYPLKSNCPIC.

It belongs to the SLX1 family. In terms of assembly, forms a heterodimer with him-18/slx-4. A divalent metal cation is required as a cofactor.

It localises to the nucleus. Catalytic subunit of a heterodimeric structure-specific endonuclease that resolves DNA secondary structures generated during DNA repair and recombination. Has endonuclease activity towards branched DNA substrates, introducing single-strand cuts in duplex DNA close to junctions with ss-DNA (Potential). Has a preference for replication forks over 5' flap structures or Holliday junctions and shows much lower activity toward 3' flap structures. Required for proper crossover distribution through inhibition of crossover formation at the central region of chromosomes. The sequence is that of Structure-specific endonuclease subunit SLX1 homolog from Caenorhabditis briggsae.